A 356-amino-acid polypeptide reads, in one-letter code: Holliday junction branch migration complex subunit RuvB (356 aa).

Residues 4–191 (TDKLATEQRI…FGIVARLEFY (188 aa)) are large ATPase domain (RuvB-L). Residues L30, R31, G72, K75, T76, T77, 138–140 (EDY), R181, Y191, and R228 each bind ATP. T76 contacts Mg(2+). Residues 192–262 (DADQLSRIVR…VADAALAMLD (71 aa)) are small ATPAse domain (RuvB-S). Positions 265–356 (PVGFDLMDRK…RDEWDTPDGK (92 aa)) are head domain (RuvB-H). R301, R320, and R325 together coordinate DNA.

The protein belongs to the RuvB family. As to quaternary structure, homohexamer. Forms an RuvA(8)-RuvB(12)-Holliday junction (HJ) complex. HJ DNA is sandwiched between 2 RuvA tetramers; dsDNA enters through RuvA and exits via RuvB. An RuvB hexamer assembles on each DNA strand where it exits the tetramer. Each RuvB hexamer is contacted by two RuvA subunits (via domain III) on 2 adjacent RuvB subunits; this complex drives branch migration. In the full resolvosome a probable DNA-RuvA(4)-RuvB(12)-RuvC(2) complex forms which resolves the HJ.

It is found in the cytoplasm. It carries out the reaction ATP + H2O = ADP + phosphate + H(+). Its function is as follows. The RuvA-RuvB-RuvC complex processes Holliday junction (HJ) DNA during genetic recombination and DNA repair, while the RuvA-RuvB complex plays an important role in the rescue of blocked DNA replication forks via replication fork reversal (RFR). RuvA specifically binds to HJ cruciform DNA, conferring on it an open structure. The RuvB hexamer acts as an ATP-dependent pump, pulling dsDNA into and through the RuvAB complex. RuvB forms 2 homohexamers on either side of HJ DNA bound by 1 or 2 RuvA tetramers; 4 subunits per hexamer contact DNA at a time. Coordinated motions by a converter formed by DNA-disengaged RuvB subunits stimulates ATP hydrolysis and nucleotide exchange. Immobilization of the converter enables RuvB to convert the ATP-contained energy into a lever motion, pulling 2 nucleotides of DNA out of the RuvA tetramer per ATP hydrolyzed, thus driving DNA branch migration. The RuvB motors rotate together with the DNA substrate, which together with the progressing nucleotide cycle form the mechanistic basis for DNA recombination by continuous HJ branch migration. Branch migration allows RuvC to scan DNA until it finds its consensus sequence, where it cleaves and resolves cruciform DNA. The sequence is that of Holliday junction branch migration complex subunit RuvB from Burkholderia cenocepacia (strain ATCC BAA-245 / DSM 16553 / LMG 16656 / NCTC 13227 / J2315 / CF5610) (Burkholderia cepacia (strain J2315)).